An 895-amino-acid polypeptide reads, in one-letter code: Structural polyprotein (895 aa).

This sequence belongs to the picornaviruses polyprotein family. Specific enzymatic cleavages in vivo yield mature proteins.

The protein resides in the virion. The protein localises to the host cytoplasm. Its function is as follows. Precursor of all the viral capsid proteins. Functionally, capsid protein 1, together with capsid proteins 2 and 3, form an icosahedral capsid protecting the viral RNA genome. The icosahedral capsid has a pseudo-T=3 symmetry with a diameter of approximately 300 Angstroms, and is composed of 60 copies of each CP1, CP2, and CP3. CP1 is situated at the 12 fivefold axes, whereas CP2 and CP3 are located at the quasi-sixfold axes. All these proteins contain a beta-sheet structure called beta-barrel jelly roll. In terms of biological role, capsid protein 4 is a tstructural component of the icosahedral capsid protecting the genomic RNA. It may play an important role in capsid assembly. Capsid protein 2, together with capsid proteins 1 and 3, form an icosahedral capsid protecting the viral RNA genome. The icosahedral capsid has a pseudo-T=3 symmetry with a diameter of approximately 300 Angstroms, and is composed of 60 copies of each CP1, CP2, and CP3. CP1 is situated at the 12 fivefold axes, whereas CP2 and CP3 are located at the quasi-sixfold axes. All these proteins contain a beta-sheet structure called beta-barrel jelly roll. Its function is as follows. Capsid protein 3, together with capsid proteins 1 and 2, form an icosahedral capsid protecting the viral RNA genome. The icosahedral capsid has a pseudo-T=3 symmetry with a diameter of approximately 300 Angstroms, and is composed of 60 copies of each CP1, CP2, and CP3. CP1 is situated at the 12 fivefold axes, whereas CP2 and CP3 are located at the quasi-sixfold axes. All these proteins contain a beta-sheet structure called beta-barrel jelly roll. The chain is Structural polyprotein from Cricket paralysis virus (isolate Teleogryllus commodus/Australia/CrPVVIC/1968) (CrPV).